Reading from the N-terminus, the 344-residue chain is Calcium homeostasis modulator protein 3 (344 aa).

At 1 to 20 the chain is on the cytoplasmic side; sequence MDKFRMLFQHFQSSSESVMN. A central pore region spans residues 9-36; that stretch reads QHFQSSSESVMNGICLLLAAVTVKLYSS. The helical transmembrane segment at 21 to 36 threads the bilayer; sequence GICLLLAAVTVKLYSS. At 37–48 the chain is on the extracellular side; it reads FDFNCPCLVHYN. Intrachain disulfides connect C41–C126 and C43–C157. A helical membrane pass occupies residues 49-71; that stretch reads ALYGLGLLLTPPLALFLCGLLAN. Topologically, residues 72–98 are cytoplasmic; sequence RQSVVMVEEWRRPAGHRRKDPGIIRYM. C99 is lipidated: S-palmitoyl cysteine. A helical membrane pass occupies residues 99–124; the sequence is CSSVLQRALAAPLVWILLALLDGKCF. Residues 125-176 lie on the Extracellular side of the membrane; sequence VCAFSSSVDPEKFLDFANMTPSQVQLFLAKVPCKEDELVRDSPARKAVSRYL. N142 is a glycosylation site (N-linked (GlcNAc...) asparagine). Residues 177-202 form a helical membrane-spanning segment; it reads RCLSQAIGWSVTLLLIIAAFLARCLR. 2 S-palmitoyl cysteine lipidation sites follow: C200 and C204. Over 203–344 the chain is Cytoplasmic; that stretch reads PCFDQTVFLQ…GTRLSQHTDV (142 aa).

This sequence belongs to the CALHM family. As to quaternary structure, associates with CALHM1 as a pore-forming subunit in a hetero-hexameric channel complex. Post-translationally, N-glycosylated. Palmitoylated by ZDHHC3 and ZDHHC15. Palmitoylation positively regulates CALHM1:CALHM3 channel conductance. Specifically expressed in circumvallate taste bud cells.

It localises to the basolateral cell membrane. It catalyses the reaction ATP(in) = ATP(out). The enzyme catalyses Ca(2+)(in) = Ca(2+)(out). It carries out the reaction Na(+)(in) = Na(+)(out). The catalysed reaction is K(+)(in) = K(+)(out). It catalyses the reaction chloride(in) = chloride(out). Pore-forming subunit of gustatory voltage-gated ion channels required for sensory perception of sweet, bitter and umami tastes. With CALHM1 forms a fast-activating voltage-gated ATP-release channel in type II taste bud cells, ATP acting as a neurotransmitter to activate afferent neural gustatory pathways. Acts both as a voltage-gated and calcium-activated ion channel: mediates neuronal excitability in response to membrane depolarization and low extracellular Ca(2+) concentration. Has poor ion selectivity and forms a wide pore (around 14 Angstroms) that mediates permeation of small ions including Ca(2+), Na(+), K(+) and Cl(-), as well as larger ions such as ATP(4-). The protein is Calcium homeostasis modulator protein 3 of Homo sapiens (Human).